A 265-amino-acid chain; its full sequence is Capsule polysaccharide export inner-membrane protein BexB (265 aa).

The next 6 helical transmembrane spans lie at 37-57, 64-84, 118-138, 151-171, 178-198, and 235-255; these read IGFF…VMMW, KFST…AMMW, LLEV…LVMI, LIAW…ICAI, FGKI…AFFF, and ESIG…LVMV. The region spanning 37 to 258 is the ABC transmembrane type-2 domain; the sequence is IGFFWLFVEP…LLGLVMVKNF (222 aa).

Belongs to the ABC-2 integral membrane protein family.

The protein resides in the cell inner membrane. May form an ATP-driven capsule polysaccharide export apparatus, in association with the BexA, BexC and BexD proteins. In Haemophilus influenzae, this protein is Capsule polysaccharide export inner-membrane protein BexB (bexB).